We begin with the raw amino-acid sequence, 281 residues long: Ribonuclease HII (281 aa).

The tract at residues 1–46 is disordered; that stretch reads MIRDTKQPIKVPAKPASRSGGKAKTVKPKTIKPKTSAKAAAAKPAS. Low complexity predominate over residues 33–46; sequence PKTSAKAAAAKPAS. Positions 73–261 constitute an RNase H type-2 domain; that stretch reads WPIAGCDEAG…VAAAWQKIEG (189 aa). Residues Asp-79, Glu-80, and Asp-170 each contribute to the a divalent metal cation site.

This sequence belongs to the RNase HII family. Mn(2+) serves as cofactor. Requires Mg(2+) as cofactor.

The protein resides in the cytoplasm. It carries out the reaction Endonucleolytic cleavage to 5'-phosphomonoester.. In terms of biological role, endonuclease that specifically degrades the RNA of RNA-DNA hybrids. The polypeptide is Ribonuclease HII (Rhodopseudomonas palustris (strain TIE-1)).